The primary structure comprises 303 residues: Protease HtpX homolog (303 aa).

2 helical membrane-spanning segments follow: residues 4–24 (VVLFLLTNLAVIAVLSITARI) and 38–58 (MGMLLAFAALIGFGGAFISLL). H144 contributes to the Zn(2+) binding site. E145 is a catalytic residue. H148 contacts Zn(2+). A run of 2 helical transmembrane segments spans residues 152-172 (GDMVTLTLIQGVVNTFVIFLS) and 199-219 (ISSIAFEIVFGVLASIVVMYF). E224 contacts Zn(2+).

It belongs to the peptidase M48B family. Zn(2+) serves as cofactor.

Its subcellular location is the cell inner membrane. The chain is Protease HtpX homolog from Chlorobium phaeobacteroides (strain BS1).